A 403-amino-acid chain; its full sequence is Phosphoglycerate kinase (403 aa).

Substrate contacts are provided by residues 24-26, arginine 39, 62-65, arginine 121, and arginine 161; these read DLN and HLGR. ATP is bound by residues lysine 211, glycine 299, glutamate 330, and 359-362; that span reads GGDS.

This sequence belongs to the phosphoglycerate kinase family. In terms of assembly, monomer.

The protein resides in the cytoplasm. It carries out the reaction (2R)-3-phosphoglycerate + ATP = (2R)-3-phospho-glyceroyl phosphate + ADP. The protein operates within carbohydrate degradation; glycolysis; pyruvate from D-glyceraldehyde 3-phosphate: step 2/5. This is Phosphoglycerate kinase from Corynebacterium kroppenstedtii (strain DSM 44385 / JCM 11950 / CIP 105744 / CCUG 35717).